Reading from the N-terminus, the 154-residue chain is Superoxide dismutase [Cu-Zn] (154 aa).

Residues His47, His49, and His64 each coordinate Cu cation. A disulfide bond links Cys58 and Cys147. Positions 64, 72, 81, and 84 each coordinate Zn(2+). His121 provides a ligand contact to Cu cation. Arg144 contributes to the substrate binding site.

It belongs to the Cu-Zn superoxide dismutase family. Homodimer. The cofactor is Cu cation. Zn(2+) is required as a cofactor.

Its subcellular location is the cytoplasm. The catalysed reaction is 2 superoxide + 2 H(+) = H2O2 + O2. Destroys radicals which are normally produced within the cells and which are toxic to biological systems. The sequence is that of Superoxide dismutase [Cu-Zn] (SOD1) from Eremothecium gossypii (strain ATCC 10895 / CBS 109.51 / FGSC 9923 / NRRL Y-1056) (Yeast).